The sequence spans 397 residues: CCA-adding enzyme (397 aa).

ATP is bound by residues glycine 27 and arginine 30. CTP is bound by residues glycine 27 and arginine 30. Mg(2+) contacts are provided by aspartate 40 and aspartate 42. Arginine 111, aspartate 154, arginine 157, arginine 160, and arginine 163 together coordinate ATP. CTP contacts are provided by arginine 111, aspartate 154, arginine 157, arginine 160, and arginine 163.

The protein belongs to the tRNA nucleotidyltransferase/poly(A) polymerase family. Bacterial CCA-adding enzyme type 3 subfamily. In terms of assembly, homodimer. Mg(2+) serves as cofactor.

It catalyses the reaction a tRNA precursor + 2 CTP + ATP = a tRNA with a 3' CCA end + 3 diphosphate. It carries out the reaction a tRNA with a 3' CCA end + 2 CTP + ATP = a tRNA with a 3' CCACCA end + 3 diphosphate. In terms of biological role, catalyzes the addition and repair of the essential 3'-terminal CCA sequence in tRNAs without using a nucleic acid template. Adds these three nucleotides in the order of C, C, and A to the tRNA nucleotide-73, using CTP and ATP as substrates and producing inorganic pyrophosphate. tRNA 3'-terminal CCA addition is required both for tRNA processing and repair. Also involved in tRNA surveillance by mediating tandem CCA addition to generate a CCACCA at the 3' terminus of unstable tRNAs. While stable tRNAs receive only 3'-terminal CCA, unstable tRNAs are marked with CCACCA and rapidly degraded. This chain is CCA-adding enzyme, found in Bacillus licheniformis (strain ATCC 14580 / DSM 13 / JCM 2505 / CCUG 7422 / NBRC 12200 / NCIMB 9375 / NCTC 10341 / NRRL NRS-1264 / Gibson 46).